The primary structure comprises 147 residues: Probable WRKY transcription factor 45 (147 aa).

The segment at 21–52 (TEFHGVDNSAQPTTSSEEKPRSKKKKKEREAR) is disordered. The WRKY DNA-binding region spans 59–124 (SQVDILDDGY…YQGVHTHAVD (66 aa)). Zn(2+)-binding residues include C90, C95, H119, and H121.

Belongs to the WRKY group I family.

It is found in the nucleus. Transcription factor. Interacts specifically with the W box (5'-(T)TGAC[CT]-3'), a frequently occurring elicitor-responsive cis-acting element. This chain is Probable WRKY transcription factor 45 (WRKY45), found in Arabidopsis thaliana (Mouse-ear cress).